Reading from the N-terminus, the 658-residue chain is tRNA 5-methylaminomethyl-2-thiouridine biosynthesis bifunctional protein MnmC (658 aa).

Positions 1-236 (MIPELPHAQL…KWEVLRGEFL (236 aa)) are tRNA (mnm(5)s(2)U34)-methyltransferase. Residues 265 to 658 (IGGGLAGCAS…ALRRLIRGKA (394 aa)) are FAD-dependent cmnm(5)s(2)U34 oxidoreductase.

It in the N-terminal section; belongs to the methyltransferase superfamily. tRNA (mnm(5)s(2)U34)-methyltransferase family. In the C-terminal section; belongs to the DAO family. FAD is required as a cofactor.

It localises to the cytoplasm. It carries out the reaction 5-aminomethyl-2-thiouridine(34) in tRNA + S-adenosyl-L-methionine = 5-methylaminomethyl-2-thiouridine(34) in tRNA + S-adenosyl-L-homocysteine + H(+). Its function is as follows. Catalyzes the last two steps in the biosynthesis of 5-methylaminomethyl-2-thiouridine (mnm(5)s(2)U) at the wobble position (U34) in tRNA. Catalyzes the FAD-dependent demodification of cmnm(5)s(2)U34 to nm(5)s(2)U34, followed by the transfer of a methyl group from S-adenosyl-L-methionine to nm(5)s(2)U34, to form mnm(5)s(2)U34. This Pseudomonas fluorescens (strain ATCC BAA-477 / NRRL B-23932 / Pf-5) protein is tRNA 5-methylaminomethyl-2-thiouridine biosynthesis bifunctional protein MnmC.